The chain runs to 607 residues: Terpenoid synthase 9 (607 aa).

Mg(2+) contacts are provided by Asp-356, Asp-360, Asn-501, and Asp-509. The DDXXD motif motif lies at 356–360 (DDTFD).

This sequence belongs to the terpene synthase family. Tpsa subfamily. Requires Mg(2+) as cofactor. The cofactor is Mn(2+). As to expression, predominantly expressed in roots but also in stems, leaves and flowers.

The protein resides in the cytoplasm. The protein operates within secondary metabolite biosynthesis; terpenoid biosynthesis. Involved in terpene biosynthesis in roots. Possesses diterpene (C20) synthase activity in vitro. Does not seem to be involved in sesquiterpene (C15) biosynthesis. In Arabidopsis thaliana (Mouse-ear cress), this protein is Terpenoid synthase 9.